Consider the following 1126-residue polypeptide: DNA-directed RNA polymerase subunit Rpo2 (1126 aa).

Residues C1060, C1063, C1078, and H1081 each contribute to the Zn(2+) site.

The protein belongs to the RNA polymerase beta chain family. Part of the 13-subunit RNA polymerase complex. Interacts with TFS4. As to quaternary structure, (Microbial infection) Binds viral protein RIP which blocks global transcription. Zn(2+) is required as a cofactor.

It localises to the cytoplasm. It catalyses the reaction RNA(n) + a ribonucleoside 5'-triphosphate = RNA(n+1) + diphosphate. Functionally, DNA-dependent RNA polymerase (RNAP) catalyzes the transcription of DNA into RNA using the four ribonucleoside triphosphates as substrates. This subunit is involved in DNA promoter recognition. In Sulfolobus acidocaldarius (strain ATCC 33909 / DSM 639 / JCM 8929 / NBRC 15157 / NCIMB 11770), this protein is DNA-directed RNA polymerase subunit Rpo2.